A 268-amino-acid chain; its full sequence is Glucosamine-6-phosphate deaminase (268 aa).

Catalysis depends on aspartate 72, which acts as the Proton acceptor; for enolization step. The For ring-opening step role is filled by aspartate 141. Catalysis depends on histidine 143, which acts as the Proton acceptor; for ring-opening step. The active-site For ring-opening step is glutamate 148.

This sequence belongs to the glucosamine/galactosamine-6-phosphate isomerase family. NagB subfamily. Homohexamer.

The enzyme catalyses alpha-D-glucosamine 6-phosphate + H2O = beta-D-fructose 6-phosphate + NH4(+). It participates in amino-sugar metabolism; N-acetylneuraminate degradation; D-fructose 6-phosphate from N-acetylneuraminate: step 5/5. With respect to regulation, allosterically activated by N-acetylglucosamine 6-phosphate (GlcNAc6P). Its function is as follows. Catalyzes the reversible isomerization-deamination of glucosamine 6-phosphate (GlcN6P) to form fructose 6-phosphate (Fru6P) and ammonium ion. This Histophilus somni (strain 2336) (Haemophilus somnus) protein is Glucosamine-6-phosphate deaminase.